The following is a 395-amino-acid chain: 8-amino-7-oxononanoate synthase (395 aa).

Arg24 is a binding site for substrate. Residue 111–112 (GF) coordinates pyridoxal 5'-phosphate. His136 contributes to the substrate binding site. Pyridoxal 5'-phosphate contacts are provided by residues Ser184, 209 to 212 (DDAH), and 240 to 243 (TLSK). The residue at position 243 (Lys243) is an N6-(pyridoxal phosphate)lysine. Thr357 is a substrate binding site.

The protein belongs to the class-II pyridoxal-phosphate-dependent aminotransferase family. BioF subfamily. As to quaternary structure, homodimer. The cofactor is pyridoxal 5'-phosphate.

The catalysed reaction is 6-carboxyhexanoyl-[ACP] + L-alanine + H(+) = (8S)-8-amino-7-oxononanoate + holo-[ACP] + CO2. It participates in cofactor biosynthesis; biotin biosynthesis. Functionally, catalyzes the decarboxylative condensation of pimeloyl-[acyl-carrier protein] and L-alanine to produce 8-amino-7-oxononanoate (AON), [acyl-carrier protein], and carbon dioxide. The polypeptide is 8-amino-7-oxononanoate synthase (Alkaliphilus metalliredigens (strain QYMF)).